The primary structure comprises 696 residues: Elongation factor G (696 aa).

The region spanning 8 to 290 (ERYRNIGISA…KVIELMPAPT (283 aa)) is the tr-type G domain. GTP is bound by residues 17–24 (AHIDAGKT), 88–92 (DTPGH), and 142–145 (NKMD).

This sequence belongs to the TRAFAC class translation factor GTPase superfamily. Classic translation factor GTPase family. EF-G/EF-2 subfamily.

The protein resides in the cytoplasm. Its function is as follows. Catalyzes the GTP-dependent ribosomal translocation step during translation elongation. During this step, the ribosome changes from the pre-translocational (PRE) to the post-translocational (POST) state as the newly formed A-site-bound peptidyl-tRNA and P-site-bound deacylated tRNA move to the P and E sites, respectively. Catalyzes the coordinated movement of the two tRNA molecules, the mRNA and conformational changes in the ribosome. This Thiobacillus denitrificans (strain ATCC 25259 / T1) protein is Elongation factor G.